An 872-amino-acid polypeptide reads, in one-letter code: Adhesive plaque matrix protein (872 aa).

A signal peptide spans 1–20; it reads MEGIKLNLCLLCIFSCDIFA. Positions 21–41 are nonrepetitive linker; that stretch reads LSNGNIHNVYGSAYSGASAGA. 69 repeat units span residues 124 to 133, 134 to 143, 144 to 153, 154 to 163, 174 to 183, 184 to 192, 193 to 202, 203 to 212, 213 to 221, 222 to 231, 232 to 241, 242 to 251, 252 to 261, 262 to 271, 272 to 281, 282 to 291, 292 to 301, 302 to 311, 312 to 321, 322 to 331, 332 to 341, 342 to 351, 352 to 361, 362 to 371, 372 to 381, 382 to 391, 402 to 411, 412 to 421, 422 to 431, 432 to 441, 442 to 451, 452 to 461, 462 to 471, 472 to 481, 482 to 491, 502 to 511, 512 to 521, 522 to 531, 532 to 541, 542 to 551, 552 to 561, 562 to 571, 572 to 581, 582 to 591, 602 to 611, 612 to 621, 622 to 631, 632 to 641, 642 to 651, 652 to 661, 662 to 671, 672 to 681, 682 to 691, 702 to 711, 712 to 721, 722 to 731, 732 to 741, 742 to 751, 752 to 761, 762 to 771, 772 to 781, 782 to 791, 792 to 801, 812 to 821, 822 to 831, 832 to 841, 842 to 851, 852 to 861, and 862 to 871. Residues 124–871 are 69 X 10 AA tandem repeats of Y-[KRQ]-[PSTAHQR]-K-[AIPTSKGV]-[STR]-Y-[PTSVA]-[PSTQA]-[STYIPAQ]; it reads YKAKTSYPPS…YKPKISYPSQ (748 aa). The nonapeptide 1 stretch occupies residues 184 to 192; sequence YKRKPSYTP. A nonapeptide 2 region spans residues 213-221; it reads YKRKPSYTP. Composition is skewed to pro residues over residues 273-282 and 291-302; these read KPKPSYPPTY and TYKPKPSYPPTY. The segment at 273–781 is disordered; sequence KPKPSYPPTY…YKPKPSYASS (509 aa). Over residues 320–360 the composition is skewed to low complexity; it reads TPYKQKPSYPPIYKSKSSYPTSYKSKKTYPPTYKPKITYPP. Residues 361–372 show a composition bias toward pro residues; sequence TYKPKPSYPPSY. Residues 377–390 are compositionally biased toward low complexity; sequence TYSPTYKPKITYPP. The span at 391-402 shows a compositional bias: pro residues; that stretch reads TYKPKPSYPPSY. The segment covering 403–450 has biased composition (low complexity); sequence KPKTTYPPTYKPKISYPPTYKPKASYVSSYKSKKTYPPTYKPKISYPP. 2 stretches are compositionally biased toward pro residues: residues 451–462 and 471–482; these read TYKPKPSYPPTY. Positions 501–540 are enriched in low complexity; the sequence is PYKQKPSYPPIYKSKSSYPTSYKSKKTYPPTYKPKITYPP. Over residues 541–552 the composition is skewed to pro residues; sequence TYKPKPSYPPSY. Low complexity-rich tracts occupy residues 568-590 and 600-640; these read YPPT…TYPP and TPYK…TYPP. The segment covering 641–652 has biased composition (pro residues); it reads TYKPKPSYPPSY. Low complexity-rich tracts occupy residues 677-690 and 698-719; these read SYPP…TYPP and YPPT…PSYP. Over residues 754–763 the composition is skewed to low complexity; the sequence is PKPSYASSYK.

Hydroxylated on proline (mono- or dihydroxylation) and tyrosine residues (to L-DOPA = 3',4'-dihydroxyphenylalanine) of the tandem repeats. As to expression, produced by the byssal gland.

The protein localises to the secreted. In terms of biological role, provides adhesiveness to the mussel's foot. Mussels produce one of the strongest water insoluble glues. The mussel's adhesive is a bundle of threads, called a byssus, formed by a fibrous collagenous core coated with adhesive proteins. This is Adhesive plaque matrix protein (FP1) from Mytilus coruscus (Sea mussel).